The chain runs to 738 residues: Melanotransferrin (738 aa).

The first 19 residues, 1–19 (MRLLSVTFWLLLSLRTVVC), serve as a signal peptide directing secretion. Transferrin-like domains lie at 23–357 (VQWC…GLLC) and 366–706 (LRWC…GMLS). Cystine bridges form between cysteine 26-cysteine 63 and cysteine 36-cysteine 54. Fe(3+) is bound by residues aspartate 78 and tyrosine 107. N-linked (GlcNAc...) asparagine glycosylation is present at asparagine 118. 4 disulfides stabilise this stretch: cysteine 130–cysteine 216, cysteine 172–cysteine 189, cysteine 186–cysteine 199, and cysteine 257–cysteine 271. Position 132 (threonine 132) interacts with hydrogencarbonate. Asparagine 135 is a glycosylation site (N-linked (GlcNAc...) asparagine). 3 residues coordinate hydrogencarbonate: arginine 136, valine 138, and glycine 139. Tyrosine 210 provides a ligand contact to Fe(3+). Fe(3+) contacts are provided by histidine 279 and tyrosine 451. At serine 462 the chain carries Phosphoserine. Asparagine 515 carries an N-linked (GlcNAc...) asparagine glycan. 2 residues coordinate Fe(3+): tyrosine 556 and histidine 625. Residue cysteine 709 is the site of GPI-anchor amidated cysteine attachment. Positions 710–738 (SGAGAAVQRVPLLALLLLTLAAGLLPRVL) are cleaved as a propeptide — removed in mature form.

It belongs to the transferrin family.

The protein localises to the cell membrane. In terms of biological role, involved in iron cellular uptake. Seems to be internalized and then recycled back to the cell membrane. Binds a single atom of iron per subunit. Could also bind zinc. The sequence is that of Melanotransferrin (Meltf) from Mus musculus (Mouse).